Consider the following 209-residue polypeptide: Uracil phosphoribosyltransferase (209 aa).

5-phospho-alpha-D-ribose 1-diphosphate-binding positions include Arg-79, Arg-104, and 131–139 (DPMLATGGS). Uracil contacts are provided by residues Ile-194 and 199-201 (GDA). Position 200 (Asp-200) interacts with 5-phospho-alpha-D-ribose 1-diphosphate.

This sequence belongs to the UPRTase family. Mg(2+) is required as a cofactor.

It catalyses the reaction UMP + diphosphate = 5-phospho-alpha-D-ribose 1-diphosphate + uracil. It functions in the pathway pyrimidine metabolism; UMP biosynthesis via salvage pathway; UMP from uracil: step 1/1. Allosterically activated by GTP. Its function is as follows. Catalyzes the conversion of uracil and 5-phospho-alpha-D-ribose 1-diphosphate (PRPP) to UMP and diphosphate. This is Uracil phosphoribosyltransferase from Pediococcus pentosaceus (strain ATCC 25745 / CCUG 21536 / LMG 10740 / 183-1w).